The sequence spans 70 residues: Mu-conotoxin PnIVB (70 aa).

The first 20 residues, 1-20, serve as a signal peptide directing secretion; the sequence is MMSKLGVLLIICLLLCPLTA. Residues 21 to 51 constitute a propeptide that is removed on maturation; sequence VPQDGDQPADQPAERMQDDISSEHHPFFDPV.

Contains 3 disulfide bonds. They are not added, since framework IV presents two different connectivities (I-V, II-III, IV-VI and I-III, II-V, IV-VI). In terms of tissue distribution, expressed by the venom duct.

It localises to the secreted. Mu-conotoxins block voltage-gated sodium channels (Nav). Blocks reversibly sodium channels in molluskan neurons, but has no effect on sodium currents in bovine chromaffin cells or in rat brain synaptosomes. Induces paralysis in bivalve mollusks (Mytilus). No effect are observed on fish (Gambusia) and fly larvae (Sarcophaga). Is approximately 6 times more potent than PnIVA in blockade of the sodium current in Lymnaea neurons. The sequence is that of Mu-conotoxin PnIVB from Conus pennaceus (Feathered cone).